The sequence spans 126 residues: Thiocyanate hydrolase subunit alpha (126 aa).

Heterododecamer consisting of 4 alpha, 4 beta, and 4 gamma subunits.

The enzyme catalyses thiocyanate + H2O + 2 H(+) = carbonyl sulfide + NH4(+). It participates in organosulfur degradation; thiocyanate degradation. Involved in the degradation of thiocyanate. This is Thiocyanate hydrolase subunit alpha (scnA) from Thiobacillus thioparus.